A 421-amino-acid chain; its full sequence is Cell division protein FtsZ (421 aa).

GTP contacts are provided by residues 26-30, 132-134, Glu-163, Arg-167, and Asn-211; these read GGGGN and GTG.

Belongs to the FtsZ family. Homodimer. Polymerizes to form a dynamic ring structure in a strictly GTP-dependent manner. Interacts directly with several other division proteins.

The protein resides in the cytoplasm. Its function is as follows. Essential cell division protein that forms a contractile ring structure (Z ring) at the future cell division site. The regulation of the ring assembly controls the timing and the location of cell division. One of the functions of the FtsZ ring is to recruit other cell division proteins to the septum to produce a new cell wall between the dividing cells. Binds GTP and shows GTPase activity. This Haemophilus influenzae (strain ATCC 51907 / DSM 11121 / KW20 / Rd) protein is Cell division protein FtsZ.